Consider the following 247-residue polypeptide: DNA polymerase sliding clamp (247 aa).

The protein belongs to the PCNA family. In terms of assembly, homotrimer. The subunits circularize to form a toroid; DNA passes through its center. Replication factor C (RFC) is required to load the toroid on the DNA.

Sliding clamp subunit that acts as a moving platform for DNA processing. Responsible for tethering the catalytic subunit of DNA polymerase and other proteins to DNA during high-speed replication. The sequence is that of DNA polymerase sliding clamp from Methanoregula boonei (strain DSM 21154 / JCM 14090 / 6A8).